We begin with the raw amino-acid sequence, 152 residues long: MSEKYVVTWDMLQIHARKLASRLLPVEQWKGIIAVSRGGLVPGALLARELGIRHVDTVCISSYDHDNQRELKVLKRAEGDGEGFIVIDDLVDTGGTAVAIREMYPKAHFVTIFAKPAGRPLVDDYVVDIPQDTWIEQPWDMGVVFVPPIAGR.

5-phospho-alpha-D-ribose 1-diphosphate contacts are provided by residues R37–G38, R69, and D88–T96. Residue R69 participates in GMP binding. D89 is a binding site for Mg(2+). Guanine-binding residues include D92 and I135. Xanthine is bound by residues D92 and I135. Residues D92 to T96 and W134 to I135 each bind GMP.

It belongs to the purine/pyrimidine phosphoribosyltransferase family. XGPT subfamily. As to quaternary structure, homotetramer. Requires Mg(2+) as cofactor.

The protein localises to the cell inner membrane. It carries out the reaction GMP + diphosphate = guanine + 5-phospho-alpha-D-ribose 1-diphosphate. The catalysed reaction is XMP + diphosphate = xanthine + 5-phospho-alpha-D-ribose 1-diphosphate. The enzyme catalyses IMP + diphosphate = hypoxanthine + 5-phospho-alpha-D-ribose 1-diphosphate. Its pathway is purine metabolism; GMP biosynthesis via salvage pathway; GMP from guanine: step 1/1. It functions in the pathway purine metabolism; XMP biosynthesis via salvage pathway; XMP from xanthine: step 1/1. Purine salvage pathway enzyme that catalyzes the transfer of the ribosyl-5-phosphate group from 5-phospho-alpha-D-ribose 1-diphosphate (PRPP) to the N9 position of the 6-oxopurines guanine and xanthine to form the corresponding ribonucleotides GMP (guanosine 5'-monophosphate) and XMP (xanthosine 5'-monophosphate), with the release of PPi. To a lesser extent, also acts on hypoxanthine. This Klebsiella pneumoniae (strain 342) protein is Xanthine-guanine phosphoribosyltransferase.